The chain runs to 186 residues: MSFLTNFLLGLGLSMDAFAVSMSSSTTIRPFHQKDALKLAVFFGGFQAFMPVLGWLGGSAVSGFVSNYASWIAFGLLTFIGGKMIYEALYGDPDGKINSLNYSVLLMLAIATSIDALAVGISFAFLNTPILEPVIIIGCVTFVMSFCGAVLGHRIGHFFEHEVEIIGGLILIGIGGKILAEHLLWI.

6 helical membrane passes run Met-1 to Ser-21, Val-41 to Val-61, Trp-71 to Gly-91, Leu-105 to Phe-125, Ile-130 to Val-150, and Ile-165 to Trp-185.

The protein belongs to the MntP (TC 9.B.29) family.

Its subcellular location is the cell membrane. Its function is as follows. Probably functions as a manganese efflux pump. This is Putative manganese efflux pump MntP from Methanosarcina barkeri (strain Fusaro / DSM 804).